The chain runs to 85 residues: U4-theraphotoxin-Hhn1t (85 aa).

An N-terminal signal peptide occupies residues Met-1 to Ala-22. A propeptide spanning residues Glu-23–Arg-48 is cleaved from the precursor. 3 disulfides stabilise this stretch: Cys-52–Cys-66, Cys-56–Cys-77, and Cys-71–Cys-82.

The protein belongs to the neurotoxin 12 (Hwtx-2) family. 02 (Hwtx-2) subfamily. Expressed by the venom gland.

The protein resides in the secreted. Postsynaptic neurotoxin. The polypeptide is U4-theraphotoxin-Hhn1t (Cyriopagopus hainanus (Chinese bird spider)).